Consider the following 322-residue polypeptide: Cytochrome c biogenesis protein CcsA (322 aa).

A run of 8 helical transmembrane segments spans residues 17-37 (VVSIVITIHLITLLVDEIVGL), 44-64 (GMIATFFCITGLLVTRWIYLG), 71-91 (LYESLIFLSWSFSIIHIVPYF), 98-118 (LSALTAPSAIFTQGFATSGLL), 143-163 (MVLGYAALLCGSLLSVALLVI), 225-245 (VISLGFLFLTIGILSGAVWAN), 258-273 (ETWAFITWTIFAIYLH), and 286-306 (AIVASMGFLIIWICYFGVNLL).

This sequence belongs to the CcmF/CycK/Ccl1/NrfE/CcsA family. As to quaternary structure, may interact with Ccs1.

It localises to the plastid. It is found in the chloroplast thylakoid membrane. Required during biogenesis of c-type cytochromes (cytochrome c6 and cytochrome f) at the step of heme attachment. In Vitis vinifera (Grape), this protein is Cytochrome c biogenesis protein CcsA.